The primary structure comprises 838 residues: Protein translocase subunit SecA (838 aa).

ATP-binding positions include Gln-87, 105–109 (GEGKT), and Asp-494. Composition is skewed to basic and acidic residues over residues 781-790 (EQEFQHKDET) and 803-819 (EDAK…KVGR). The segment at 781–838 (EQEFQHKDETANVQYSGPAESAEDAKKEPKRREAPKVGRNDPCPCGSGKKYKKCHGAK) is disordered. Cys-823, Cys-825, Cys-834, and His-835 together coordinate Zn(2+). Over residues 829-838 (KKYKKCHGAK) the composition is skewed to basic residues.

The protein belongs to the SecA family. Monomer and homodimer. Part of the essential Sec protein translocation apparatus which comprises SecA, SecYEG and auxiliary proteins SecDF-YajC and YidC. Zn(2+) serves as cofactor.

The protein localises to the cell inner membrane. Its subcellular location is the cytoplasm. It carries out the reaction ATP + H2O + cellular proteinSide 1 = ADP + phosphate + cellular proteinSide 2.. In terms of biological role, part of the Sec protein translocase complex. Interacts with the SecYEG preprotein conducting channel. Has a central role in coupling the hydrolysis of ATP to the transfer of proteins into and across the cell membrane, serving as an ATP-driven molecular motor driving the stepwise translocation of polypeptide chains across the membrane. The sequence is that of Protein translocase subunit SecA from Solidesulfovibrio magneticus (strain ATCC 700980 / DSM 13731 / RS-1) (Desulfovibrio magneticus).